The following is a 259-amino-acid chain: Phosphate import ATP-binding protein PstB (259 aa).

The ABC transporter domain maps to 13-254; sequence LEVNNLNFHY…PRLQRTEDYI (242 aa). Residue 45-52 coordinates ATP; it reads GPSGCGKS.

This sequence belongs to the ABC transporter superfamily. Phosphate importer (TC 3.A.1.7) family. The complex is composed of two ATP-binding proteins (PstB), two transmembrane proteins (PstC and PstA) and a solute-binding protein (PstS).

It is found in the cell inner membrane. It carries out the reaction phosphate(out) + ATP + H2O = ADP + 2 phosphate(in) + H(+). In terms of biological role, part of the ABC transporter complex PstSACB involved in phosphate import. Responsible for energy coupling to the transport system. This chain is Phosphate import ATP-binding protein PstB, found in Pasteurella multocida (strain Pm70).